A 373-amino-acid polypeptide reads, in one-letter code: Putative F-box/kelch-repeat protein At5g24040 (373 aa).

An F-box domain is found at 2 to 50 (VKWSELPPEILHLISLKIDNPFDLIHFRSVCSFWRSSSLLKFRHMTSLR). Kelch repeat units follow at residues 165-207 (NEYM…PFKG) and 262-308 (YDFH…CTFS).

The chain is Putative F-box/kelch-repeat protein At5g24040 from Arabidopsis thaliana (Mouse-ear cress).